The primary structure comprises 217 residues: Probable GTP-binding protein EngB (217 aa).

One can recognise an EngB-type G domain in the interval 37–214 (AGIEVAFAGR…RAAMIRLLDE (178 aa)). GTP is bound by residues 45–52 (GRSNVGKS), 72–76 (GRTQE), 92–95 (DMPG), 159–162 (TKAD), and 193–195 (TSS). Residues serine 52 and threonine 74 each coordinate Mg(2+).

It belongs to the TRAFAC class TrmE-Era-EngA-EngB-Septin-like GTPase superfamily. EngB GTPase family. The cofactor is Mg(2+).

In terms of biological role, necessary for normal cell division and for the maintenance of normal septation. The polypeptide is Probable GTP-binding protein EngB (Rhodopseudomonas palustris (strain BisB5)).